Here is a 1387-residue protein sequence, read N- to C-terminus: Magnesium-chelatase subunit ChlH, chloroplastic (1387 aa).

The transit peptide at Met1–Arg50 directs the protein to the chloroplast.

It belongs to the Mg-chelatase subunit H family. In terms of assembly, the magnesium chelatase complex is a heterotrimer consisting of subunits CHLI, CHLD and CHLH.

The protein localises to the plastid. It is found in the chloroplast stroma. Its subcellular location is the chloroplast membrane. The enzyme catalyses protoporphyrin IX + Mg(2+) + ATP + H2O = Mg-protoporphyrin IX + ADP + phosphate + 3 H(+). The protein operates within porphyrin-containing compound metabolism; chlorophyll biosynthesis. Involved in chlorophyll biosynthesis. Catalyzes the insertion of magnesium ion into protoporphyrin IX to yield Mg-protoporphyrin IX. The reaction takes place in two steps, with an ATP-dependent activation followed by an ATP-dependent chelation step. May be involved in the plastid-to-nucleus retrograde signaling. The protein is Magnesium-chelatase subunit ChlH, chloroplastic (CHLH) of Oryza sativa subsp. indica (Rice).